Consider the following 734-residue polypeptide: Tripartite terminase subunit 3 (734 aa).

A Nuclear localization signal motif is present at residues 184–190 (ASKRARV). The Walker A motif signature appears at 259–266 (VPRRHGKT). The short motif at 353–358 (LLFVDE) is the Walker B motif element. Glu358 acts as the For ATPase activity in catalysis. Residues Asp511, Glu583, and Asp707 each act as for nuclease activity in the active site.

This sequence belongs to the herpesviridae TRM3 protein family. In terms of assembly, interacts with the terminase subunits TRM1 and TRM2. Interacts with portal protein.

The protein localises to the host nucleus. Its function is as follows. Component of the molecular motor that translocates viral genomic DNA in empty capsid during DNA packaging. Forms a tripartite terminase complex together with TRM1 and TRM2 in the host cytoplasm. Once the complex reaches the host nucleus, it interacts with the capsid portal vertex. This portal forms a ring in which genomic DNA is translocated into the capsid. TRM3 carries an RNase H-like nuclease activity that plays an important role for the cleavage of concatemeric viral DNA into unit length genomes. The chain is Tripartite terminase subunit 3 from Equus caballus (Horse).